Consider the following 487-residue polypeptide: Serine/threonine-protein kinase 4 (487 aa).

Position 1 is an N-acetylmethionine (Met-1). Thr-3 is subject to Phosphothreonine. In terms of domain architecture, Protein kinase spans 30-281 (FDVLEKLGEG…ATQLLQHPFV (252 aa)). ATP contacts are provided by residues 36-44 (LGEGSYGSV) and Lys-59. Asp-149 acts as the Proton acceptor in catalysis. A Phosphothreonine; by autocatalysis modification is found at Thr-183. Phosphoserine is present on Ser-265. A coiled-coil region spans residues 290-310 (LRDLINEAMDVKLKRQEAQQR). The tract at residues 305-338 (QEAQQREVDQDDEENSEEDELDSGTMVRAVGDDM) is disordered. Positions 313 to 326 (DQDDEENSEEDELD) are enriched in acidic residues. Ser-320 is modified (phosphoserine). Thr-340 and Thr-367 each carry phosphothreonine. At Thr-387 the chain carries Phosphothreonine; by PKB/AKT1. Phosphoserine is present on residues Ser-410 and Ser-414. Tyr-433 carries the post-translational modification Phosphotyrosine. Residues 433-480 (YEFLKSWTVEDLQKRLLALDPMMEQEIEEIRQKYQSKRQPILDAIEAK) form the SARAH domain.

The protein belongs to the protein kinase superfamily. STE Ser/Thr protein kinase family. STE20 subfamily. Homodimer; mediated via the coiled-coil region. Interacts with NORE1, which inhibits autoactivation. Interacts with and stabilizes SAV1. Interacts with RASSF1. Interacts with FOXO3. Interacts with RASSF2 (via SARAH domain). Interacts with AR, PKB/AKT1, TNNI3 and SIRT1. Interacts with DLG5 (via PDZ domain 3). Interacts with MARK3 and SCRIB in the presence of DLG5. It depends on Mg(2+) as a cofactor. Post-translationally, autophosphorylated on serine and threonine residues. Phosphorylation at Thr-387 by PKB/AKT1, leads to inhibition of its: kinase activity, nuclear translocation and autophosphorylation at Thr-183. It also diminishes its cleavage by caspases and its ability to phosphorylate FOXO3. In terms of processing, proteolytically cleaved by caspase-3 during apoptosis at Asp-326 and Asp-349 resulting in a 37 kDa or a 39 kDa subunit respectively. The 39 kDa subunit is further cleaved into the 37 kDa form. Proteolytic cleavage results in kinase activation and nuclear translocation of the truncated form (MST1/N). It is less likely that cleavage at Asp-349 is a prerequisite for activation as this site is not conserved in the murine ortholog.

The protein resides in the cytoplasm. It localises to the nucleus. It carries out the reaction L-seryl-[protein] + ATP = O-phospho-L-seryl-[protein] + ADP + H(+). It catalyses the reaction L-threonyl-[protein] + ATP = O-phospho-L-threonyl-[protein] + ADP + H(+). Inhibited by the C-terminal non-catalytic region. Activated by caspase-cleavage. Full activation also requires homodimerization and autophosphorylation of Thr-183. Activated by RASSF1 which acts by preventing its dephosphorylation. Stress-activated, pro-apoptotic kinase which, following caspase-cleavage, enters the nucleus and induces chromatin condensation followed by internucleosomal DNA fragmentation. Key component of the Hippo signaling pathway which plays a pivotal role in organ size control and tumor suppression by restricting proliferation and promoting apoptosis. The core of this pathway is composed of a kinase cascade wherein STK3/MST2 and STK4/MST1, in complex with its regulatory protein SAV1, phosphorylates and activates LATS1/2 in complex with its regulatory protein MOB1, which in turn phosphorylates and inactivates YAP1 oncoprotein and WWTR1/TAZ. Phosphorylation of YAP1 by LATS2 inhibits its translocation into the nucleus to regulate cellular genes important for cell proliferation, cell death, and cell migration. STK3/MST2 and STK4/MST1 are required to repress proliferation of mature hepatocytes, to prevent activation of facultative adult liver stem cells (oval cells), and to inhibit tumor formation. Phosphorylates 'Ser-14' of histone H2B (H2BS14ph) during apoptosis. Phosphorylates FOXO3 upon oxidative stress, which results in its nuclear translocation and cell death initiation. Phosphorylates MOBKL1A, MOBKL1B and RASSF2. Phosphorylates TNNI3 (cardiac Tn-I) and alters its binding affinity to TNNC1 (cardiac Tn-C) and TNNT2 (cardiac Tn-T). Phosphorylates FOXO1 on 'Ser-212' and regulates its activation and stimulates transcription of PMAIP1 in a FOXO1-dependent manner. Phosphorylates SIRT1 and inhibits SIRT1-mediated p53/TP53 deacetylation, thereby promoting p53/TP53 dependent transcription and apoptosis upon DNA damage. Acts as an inhibitor of PKB/AKT1. Phosphorylates AR on 'Ser-650' and suppresses its activity by intersecting with PKB/AKT1 signaling and antagonizing formation of AR-chromatin complexes. The protein is Serine/threonine-protein kinase 4 (STK4) of Lemur catta (Ring-tailed lemur).